The primary structure comprises 1474 residues: Adhesion G protein-coupled receptor L1 (1474 aa).

An N-terminal signal peptide occupies residues 1-24 (MARLAAVLWNLCVTAVLVTSATQG). Over 25–858 (LSRAGLPFGL…EIYQGRINEL (834 aa)) the chain is Extracellular. Residues 40–129 (ACEGYPIELR…KYLEVQYDCV (90 aa)) form the SUEL-type lectin domain. Disulfide bonds link Cys41-Cys71, Cys50-Cys128, Cys83-Cys115, Cys96-Cys102, and Cys140-Cys322. Residue Glu42 participates in alpha-L-rhamnose binding. A glycan (N-linked (GlcNAc...) asparagine) is linked at Asn98. 117–120 (GTYK) contacts alpha-L-rhamnose. Residues 139–398 (VCPGTLQKVL…VVRYSLEFGP (260 aa)) form the Olfactomedin-like domain. The disordered stretch occupies residues 400–434 (DPSAGPATSPPLSTTTTARPTPLTSTASPAATTPL). A compositionally biased stretch (low complexity) spans 405-434 (PATSPPLSTTTTARPTPLTSTASPAATTPL). 2 cysteine pairs are disulfide-bonded: Cys480-Cys515 and Cys503-Cys532. 6 N-linked (GlcNAc...) asparagine glycosylation sites follow: Asn531, Asn640, Asn742, Asn801, Asn806, and Asn827. A GAIN-B domain is found at 669–851 (PARFLAAKEN…AVLMAHREIY (183 aa)). Disulfide bonds link Cys802–Cys833 and Cys821–Cys835. Residues 802–851 (CSFWNYSERSMLGYWSTQGCRLVESNKTHTTCACSHLTNFAVLMAHREIY) form a GPS region. Residues 859 to 879 (LLSVITWVGIVISLVCLAICI) traverse the membrane as a helical segment. The Cytoplasmic segment spans residues 880-893 (STFCFLRGLQTDRN). The helical transmembrane segment at 894–914 (TIHKNLCINLFLAELLFLVGI) threads the bilayer. Residues 915–920 (DKTQYE) lie on the Extracellular side of the membrane. The helical transmembrane segment at 921–941 (IACPIFAGLLHYFFLAAFSWL) threads the bilayer. Over 942 to 964 (CLEGVHLYLLLVEVFESEYSRTK) the chain is Cytoplasmic. Residues 965 to 985 (YYYLGGYCFPALVVGIAAAID) traverse the membrane as a helical segment. The Extracellular portion of the chain corresponds to 986–1002 (YRSYGTEKACWLRVDNY). The chain crosses the membrane as a helical span at residues 1003–1023 (FIWSFIGPVSFVIVVNLVFLM). Topologically, residues 1024 to 1050 (VTLHKMIRSSSVLKPDSSRLDNIKSWA) are cytoplasmic. The helical transmembrane segment at 1051–1071 (LGAIALLFLLGLTWAFGLLFI) threads the bilayer. Residues 1072-1075 (NKES) are Extracellular-facing. A helical membrane pass occupies residues 1076–1096 (VVMAYLFTTFNAFQGVFIFVF). Topologically, residues 1097–1474 (HCALQKKVHK…DGQMQLVTSL (378 aa)) are cytoplasmic. An Omega-N-methylarginine modification is found at Arg1194. Ser1220 bears the Phosphoserine mark. Disordered regions lie at residues 1248–1273 (FNNS…RGRN), 1294–1328 (RGSS…PGGA), 1360–1429 (ESES…SRPP), and 1451–1474 (YLAA…VTSL). Composition is skewed to pro residues over residues 1302–1314 (GPPP…PPVP) and 1408–1420 (ALPP…PGPP). Ser1473 bears the Phosphoserine mark.

It belongs to the G-protein coupled receptor 2 family. Adhesion G-protein coupled receptor (ADGR) subfamily. Forms a heterodimer, consisting of a large extracellular region (p120) non-covalently linked to a seven-transmembrane moiety (p85). Interacts with syntaxin and with proteins of the SHANK family via the PDZ domain. Interacts (via extracellular domain) with FLRT1, FLRT2 and FLRT3 (via extracellular domain). In terms of processing, autoproteolytically cleaved into 2 subunits, an extracellular subunit and a seven-transmembrane subunit. This proteolytic processing takes place early in the biosynthetic pathway, either in the endoplasmic reticulum or in the early compartment of the Golgi apparatus.

It localises to the cell membrane. It is found in the cell projection. The protein localises to the axon. Its subcellular location is the growth cone. The protein resides in the synapse. It localises to the presynaptic cell membrane. It is found in the synaptosome. Functionally, calcium-independent receptor of high affinity for alpha-latrotoxin, an excitatory neurotoxin present in black widow spider venom which triggers massive exocytosis from neurons and neuroendocrine cells. Receptor for TENM2 that mediates heterophilic synaptic cell-cell contact and postsynaptic specialization. Receptor probably implicated in the regulation of exocytosis. The protein is Adhesion G protein-coupled receptor L1 of Homo sapiens (Human).